Consider the following 381-residue polypeptide: Phosphatidyl-myo-inositol mannosyltransferase (381 aa).

2 residues coordinate GDP-alpha-D-mannose: Tyr9 and Gly16. A 1,2-diacyl-sn-glycero-3-phospho-(1D-myo-inositol)-binding positions include Gln18, 69-70 (FN), and Arg75. GDP-alpha-D-mannose is bound by residues Arg204, 209 to 210 (RK), 251 to 253 (LDD), Arg256, 274 to 278 (ESFGI), and Glu282.

The protein belongs to the glycosyltransferase group 1 family. Glycosyltransferase 4 subfamily. In terms of assembly, monomer. Mg(2+) is required as a cofactor.

It localises to the cell membrane. It carries out the reaction a 1,2-diacyl-sn-glycero-3-phospho-(1D-myo-inositol) + GDP-alpha-D-mannose = a 1,2-diacyl-sn-glycero-3-phospho-[alpha-D-mannopyranosyl-(1&lt;-&gt;6)-D-myo-inositol] + GDP + H(+). The protein operates within phospholipid metabolism; phosphatidylinositol metabolism. Involved in the biosynthesis of phosphatidyl-myo-inositol mannosides (PIM) which are early precursors in the biosynthesis of lipomannans (LM) and lipoarabinomannans (LAM). Catalyzes the addition of a mannosyl residue from GDP-D-mannose (GDP-Man) to the position 2 of the carrier lipid phosphatidyl-myo-inositol (PI) to generate a phosphatidyl-myo-inositol bearing an alpha-1,2-linked mannose residue (PIM1). The sequence is that of Phosphatidyl-myo-inositol mannosyltransferase from Propionibacterium freudenreichii subsp. shermanii (strain ATCC 9614 / DSM 4902 / CIP 103027 / NCIMB 8099 / CIRM-BIA1).